An 85-amino-acid chain; its full sequence is U4-theraphotoxin-Hhn1a (85 aa).

The first 22 residues, 1–22 (MKVTLIAILTCAAVLVLHTTAA), serve as a signal peptide directing secretion. Positions 23–48 (EELEAESQLMEVGMPDTELEAVDEER) are excised as a propeptide. Disulfide bonds link cysteine 52–cysteine 66, cysteine 56–cysteine 77, and cysteine 71–cysteine 82.

It belongs to the neurotoxin 12 (Hwtx-2) family. 02 (Hwtx-2) subfamily. Monomer. As to expression, expressed by the venom gland.

The protein resides in the secreted. Its function is as follows. Neurotoxin active on both insects and mammals. The sequence is that of U4-theraphotoxin-Hhn1a from Cyriopagopus hainanus (Chinese bird spider).